A 452-amino-acid polypeptide reads, in one-letter code: Exodeoxyribonuclease 7 large subunit (452 aa).

The protein belongs to the XseA family. In terms of assembly, heterooligomer composed of large and small subunits.

Its subcellular location is the cytoplasm. It catalyses the reaction Exonucleolytic cleavage in either 5'- to 3'- or 3'- to 5'-direction to yield nucleoside 5'-phosphates.. Functionally, bidirectionally degrades single-stranded DNA into large acid-insoluble oligonucleotides, which are then degraded further into small acid-soluble oligonucleotides. The polypeptide is Exodeoxyribonuclease 7 large subunit (Bacillus anthracis (strain A0248)).